The following is a 966-amino-acid chain: Serine/threonine-protein kinase 10 (966 aa).

Phosphoserine is present on residues S13 and S20. A Protein kinase domain is found at 36 to 294 (WEIVGELGDG…AAQLLQHPFV (259 aa)). ATP contacts are provided by residues 42–50 (LGDGAFGKV) and K65. The Proton acceptor role is filled by D157. An activation segment region spans residues 175 to 224 (DFGVSAKNLKTLQKRDSFIGTPYWMAPEVVLCETMKDAPYDYKADIWSLG). At T185 the chain carries Phosphothreonine; by autocatalysis. A Phosphoserine modification is found at S191. Polar residues-rich tracts occupy residues 341 to 363 (TQDS…DSST) and 371 to 392 (QEPV…TTSP). The interval 341-497 (TQDSANVTQP…NLSTSESMDY (157 aa)) is disordered. A compositionally biased stretch (basic and acidic residues) spans 421 to 430 (IQMDEEKQIP). A phosphoserine mark is found at S437, S449, S453, and S484. A compositionally biased stretch (polar residues) spans 438 to 456 (PAASKSQKANQSRPNSSAL). Polar residues predominate over residues 485-497 (DCSNLSTSESMDY). Residues S513 and S548 each carry the phosphoserine modification. Positions 588–936 (LQLEQMHKRF…LNQKKREQEM (349 aa)) form a coiled coil. Disordered regions lie at residues 660–692 (KKEV…KKQR), 826–865 (INGA…ENQM), and 901–966 (LDES…GDAS). Basic and acidic residues-rich tracts occupy residues 834-865 (EQRE…ENQM) and 901-946 (LDES…EAEP). T950 is modified (phosphothreonine). A compositionally biased stretch (polar residues) spans 950–966 (TPSKASNFFPYSSGDAS).

This sequence belongs to the protein kinase superfamily. STE Ser/Thr protein kinase family. STE20 subfamily. Homodimer; homodimerization is required for activation segment autophosphorylation. In terms of processing, autophosphorylates following homodimerization, leading to activation of the protein. As to expression, expressed predominantly in lymphoid organs such as spleen, thymus, and bone marrow.

The protein resides in the cell membrane. It catalyses the reaction L-seryl-[protein] + ATP = O-phospho-L-seryl-[protein] + ADP + H(+). The enzyme catalyses L-threonyl-[protein] + ATP = O-phospho-L-threonyl-[protein] + ADP + H(+). With respect to regulation, inhibited by the pyrrole-indolinone inhibitor SU11274 (K00593): intercalates between the ATP-binding Lys-65 and alpha-C glutamate (Glu-81), resulting in a partial disordering of the lysine side chain. Also specifically inhibited by erlotinib. Slightly inhibited by gefitinib. In terms of biological role, serine/threonine-protein kinase involved in regulation of lymphocyte migration. Phosphorylates MSN, and possibly PLK1. Involved in regulation of lymphocyte migration by mediating phosphorylation of ERM proteins such as MSN. Acts as a negative regulator of MAP3K1/MEKK1. May also act as a cell cycle regulator by acting as a polo kinase kinase: mediates phosphorylation of PLK1 in vitro; however such data require additional evidences in vivo. The chain is Serine/threonine-protein kinase 10 (Stk10) from Mus musculus (Mouse).